We begin with the raw amino-acid sequence, 409 residues long: Mitochondrial import inner membrane translocase subunit TIM50-B (409 aa).

The transit peptide at 1–42 directs the protein to the mitochondrion; sequence MSLIAIERVLCGWPKICRKLIVTSRSLTSGLRRALVKQPRKG. The Mitochondrial matrix portion of the chain corresponds to 43–127; it reads GDVGKPGMEL…ELERAFRRMK (85 aa). The tract at residues 93–114 is disordered; that stretch reads PQTSEESNDEESRERRKLEEEE. Positions 102–111 are enriched in basic and acidic residues; that stretch reads EESRERRKLE. Residues 128 to 148 traverse the membrane as a helical segment; the sequence is LGFGLFGIGSMLFSFWAIYFY. Residues 149–409 are Mitochondrial intermembrane-facing; the sequence is GRPSLDEHGN…KNWTRGFINH (261 aa). Residues 205–348 form the FCP1 homology domain; that stretch reads YVQPPYTLVL…FELTSFLSVL (144 aa).

The protein belongs to the TIM50 family. Component of the TIM23 complex at least composed of Tim23, Tim17 (Tim17a1, Tim17a2 or Tim17b1) and a Tim50. Exclusively expressed in the testis.

It localises to the mitochondrion inner membrane. Functionally, essential component of the TIM23 complex, a complex that mediates the translocation of transit peptide-containing proteins across the mitochondrial inner membrane. In Drosophila melanogaster (Fruit fly), this protein is Mitochondrial import inner membrane translocase subunit TIM50-B (ttm2).